The chain runs to 130 residues: Small ribosomal subunit protein uS11c (130 aa).

Belongs to the universal ribosomal protein uS11 family. Part of the 30S ribosomal subunit.

The protein localises to the plastid. It is found in the chloroplast. The chain is Small ribosomal subunit protein uS11c from Bigelowiella natans (Pedinomonas minutissima).